The chain runs to 247 residues: DNA polymerase sliding clamp (247 aa).

It belongs to the PCNA family. In terms of assembly, homotrimer. The subunits circularize to form a toroid; DNA passes through its center. Replication factor C (RFC) is required to load the toroid on the DNA.

Sliding clamp subunit that acts as a moving platform for DNA processing. Responsible for tethering the catalytic subunit of DNA polymerase and other proteins to DNA during high-speed replication. The protein is DNA polymerase sliding clamp of Methanosphaerula palustris (strain ATCC BAA-1556 / DSM 19958 / E1-9c).